A 317-amino-acid polypeptide reads, in one-letter code: Transcription initiation factor IIB 3 (317 aa).

The segment covering Met1–Glu14 has biased composition (basic and acidic residues). The segment at Met1–Cys25 is disordered. The segment at Glu21–Glu50 adopts a TFIIB-type zinc-finger fold. Zn(2+) contacts are provided by Cys25, Cys28, Cys42, and Cys45. Residues Ala62 to His83 form a disordered region. 2 repeat units span residues Ser136–Leu219 and Glu230–Glu311.

This sequence belongs to the TFIIB family.

Its function is as follows. Stabilizes TBP binding to an archaeal box-A promoter. Also responsible for recruiting RNA polymerase II to the pre-initiation complex (DNA-TBP-TFIIB). The sequence is that of Transcription initiation factor IIB 3 from Halobacterium salinarum (strain ATCC 700922 / JCM 11081 / NRC-1) (Halobacterium halobium).